The following is a 626-amino-acid chain: DNA primase (626 aa).

A CHC2-type zinc finger spans residues 39-63 (CPFHGEKTPSFSVSPEKQIFHCFGC). Residues 264 to 346 (EEITLMEGFM…DVFVLQLPAG (83 aa)) form the Toprim domain. The Mg(2+) site is built by Glu-270, Asp-314, and Asp-316.

This sequence belongs to the DnaG primase family. In terms of assembly, monomer. Interacts with DnaB. Requires Zn(2+) as cofactor. The cofactor is Mg(2+).

The enzyme catalyses ssDNA + n NTP = ssDNA/pppN(pN)n-1 hybrid + (n-1) diphosphate.. In terms of biological role, RNA polymerase that catalyzes the synthesis of short RNA molecules used as primers for DNA polymerase during DNA replication. The polypeptide is DNA primase (Listeria monocytogenes serovar 1/2a (strain ATCC BAA-679 / EGD-e)).